A 525-amino-acid chain; its full sequence is UPF0288 protein MA_3997 (525 aa).

This sequence belongs to the UPF0288 family.

This Methanosarcina acetivorans (strain ATCC 35395 / DSM 2834 / JCM 12185 / C2A) protein is UPF0288 protein MA_3997.